The sequence spans 544 residues: WD repeat-containing protein 25 (544 aa).

Disordered regions lie at residues 17-74 and 183-208; these read DSDS…EDPG and QRQA…GRAP. The span at 30-39 shows a compositional bias: polar residues; it reads FNATGQQKDT. WD repeat units lie at residues 244–286, 290–329, 330–373, 375–420, 424–463, 469–510, and 513–544; these read GHRG…HCLQ, LHTE…QLFS, GRSD…RSYK, TIQQ…KISN, HERF…RMSR, GHKV…RACT, and GHTQ…KIWH.

As to expression, expressed in heart, muscle, testis, ovary, uterus and prostate.

This is WD repeat-containing protein 25 from Homo sapiens (Human).